A 509-amino-acid chain; its full sequence is Bifunctional purine biosynthesis protein PurH (509 aa).

Positions 1-146 constitute an MGS-like domain; that stretch reads MTIQKINRVL…KNWYRVGVCV (146 aa).

It belongs to the PurH family.

It carries out the reaction (6R)-10-formyltetrahydrofolate + 5-amino-1-(5-phospho-beta-D-ribosyl)imidazole-4-carboxamide = 5-formamido-1-(5-phospho-D-ribosyl)imidazole-4-carboxamide + (6S)-5,6,7,8-tetrahydrofolate. It catalyses the reaction IMP + H2O = 5-formamido-1-(5-phospho-D-ribosyl)imidazole-4-carboxamide. The protein operates within purine metabolism; IMP biosynthesis via de novo pathway; 5-formamido-1-(5-phospho-D-ribosyl)imidazole-4-carboxamide from 5-amino-1-(5-phospho-D-ribosyl)imidazole-4-carboxamide (10-formyl THF route): step 1/1. Its pathway is purine metabolism; IMP biosynthesis via de novo pathway; IMP from 5-formamido-1-(5-phospho-D-ribosyl)imidazole-4-carboxamide: step 1/1. The sequence is that of Bifunctional purine biosynthesis protein PurH from Natranaerobius thermophilus (strain ATCC BAA-1301 / DSM 18059 / JW/NM-WN-LF).